The sequence spans 283 residues: 2,3,4,5-tetrahydropyridine-2,6-dicarboxylate N-succinyltransferase (283 aa).

Substrate-binding residues include arginine 107 and aspartate 144.

This sequence belongs to the transferase hexapeptide repeat family. As to quaternary structure, homotrimer.

The protein resides in the cytoplasm. It catalyses the reaction (S)-2,3,4,5-tetrahydrodipicolinate + succinyl-CoA + H2O = (S)-2-succinylamino-6-oxoheptanedioate + CoA. The protein operates within amino-acid biosynthesis; L-lysine biosynthesis via DAP pathway; LL-2,6-diaminopimelate from (S)-tetrahydrodipicolinate (succinylase route): step 1/3. The sequence is that of 2,3,4,5-tetrahydropyridine-2,6-dicarboxylate N-succinyltransferase from Rhodospirillum rubrum (strain ATCC 11170 / ATH 1.1.1 / DSM 467 / LMG 4362 / NCIMB 8255 / S1).